The sequence spans 472 residues: Protein translocase subunit SecD (472 aa).

6 consecutive transmembrane segments (helical) span residues 8–28 (ILFT…PLSG), 300–320 (TIIN…IIFY), 325–347 (VIAD…WTGA), 353–375 (GIAG…YERI), 396–416 (VFST…VLFF), and 424–444 (GFAV…LVVS).

This sequence belongs to the SecD/SecF family. SecD subfamily. In terms of assembly, forms a complex with SecF. Part of the essential Sec protein translocation apparatus which comprises SecA, SecYEG and auxiliary proteins SecDF. Other proteins may also be involved.

Its subcellular location is the cell inner membrane. Its function is as follows. Part of the Sec protein translocase complex. Interacts with the SecYEG preprotein conducting channel. SecDF uses the proton motive force (PMF) to complete protein translocation after the ATP-dependent function of SecA. In Petrotoga mobilis (strain DSM 10674 / SJ95), this protein is Protein translocase subunit SecD.